The chain runs to 233 residues: 7-cyano-7-deazaguanine synthase (233 aa).

Residue 11-21 (FSGGQDSTTCL) coordinates ATP. The Zn(2+) site is built by cysteine 199, cysteine 214, cysteine 217, and cysteine 220.

The protein belongs to the QueC family. Requires Zn(2+) as cofactor.

It carries out the reaction 7-carboxy-7-deazaguanine + NH4(+) + ATP = 7-cyano-7-deazaguanine + ADP + phosphate + H2O + H(+). It participates in purine metabolism; 7-cyano-7-deazaguanine biosynthesis. Its function is as follows. Catalyzes the ATP-dependent conversion of 7-carboxy-7-deazaguanine (CDG) to 7-cyano-7-deazaguanine (preQ(0)). In Herminiimonas arsenicoxydans, this protein is 7-cyano-7-deazaguanine synthase.